The chain runs to 319 residues: Malate dehydrogenase (319 aa).

Residues G10–G15 and D34 each bind NAD(+). 2 residues coordinate substrate: R83 and R89. Residues N96 and I119 to N121 contribute to the NAD(+) site. The substrate site is built by N121 and R152. Residue H176 is the Proton acceptor of the active site.

It belongs to the LDH/MDH superfamily. MDH type 3 family.

It carries out the reaction (S)-malate + NAD(+) = oxaloacetate + NADH + H(+). Catalyzes the reversible oxidation of malate to oxaloacetate. This Francisella novicida protein is Malate dehydrogenase.